Here is a 152-residue protein sequence, read N- to C-terminus: Protein IpgF (152 aa).

The N-terminal stretch at 1 to 17 is a signal peptide; the sequence is MSRFVFILLCFIPHLGR.

The protein belongs to the IagB/IpgF/P19 family.

This chain is Protein IpgF (ipgF), found in Shigella flexneri.